Here is a 437-residue protein sequence, read N- to C-terminus: Protein PhoH2 (437 aa).

A PINc domain is found at 7–134; the sequence is RTYVLDTSVL…LVSKDIPLRV (128 aa).

The protein in the N-terminal section; belongs to the PINc/VapC protein family. It in the C-terminal section; belongs to the PhoH family. Interacts with antitoxin PhoAT. Mg(2+) is required as a cofactor.

The enzyme catalyses n ATP + n H2O + wound RNA = n ADP + n phosphate + unwound RNA.. The catalysed reaction is ATP + H2O = ADP + phosphate + H(+). It catalyses the reaction GTP + H2O = GDP + phosphate + H(+). Toxic component of a type II toxin-antitoxin (TA) system. The possible cognate antitoxin is PhoAT; the toxin gene can be expressed in the absence of the antitoxin gene in an endogenous mc(2)155 double deletion. Unwinds and/or cleaves 5'-tailed RNA in vitro that starts with 5'-AC, the reaction requires hydrolyzable ATP; double-stranded (ds)RNA and dsDNA are not unwound or cleaved. Has ATPase and GTPase activities. The chain is Protein PhoH2 from Mycolicibacterium smegmatis (strain ATCC 700084 / mc(2)155) (Mycobacterium smegmatis).